A 109-amino-acid polypeptide reads, in one-letter code: METQAIVRGVRLSCDKGRLVADLIRGKKVGLALDILTFTQKKAAGIIKKALESAIANAEHNDGADIDELRVTSIYVEQGATLKRFSARAKGRGNRISKPTAHIYVTVGN.

This sequence belongs to the universal ribosomal protein uL22 family. As to quaternary structure, part of the 50S ribosomal subunit.

In terms of biological role, this protein binds specifically to 23S rRNA; its binding is stimulated by other ribosomal proteins, e.g. L4, L17, and L20. It is important during the early stages of 50S assembly. It makes multiple contacts with different domains of the 23S rRNA in the assembled 50S subunit and ribosome. Its function is as follows. The globular domain of the protein is located near the polypeptide exit tunnel on the outside of the subunit, while an extended beta-hairpin is found that lines the wall of the exit tunnel in the center of the 70S ribosome. The polypeptide is Large ribosomal subunit protein uL22 (Leptothrix cholodnii (strain ATCC 51168 / LMG 8142 / SP-6) (Leptothrix discophora (strain SP-6))).